The chain runs to 529 residues: Keratin, type II cytoskeletal 74 (529 aa).

Positions 1–139 (MSRQLNIKSS…DPEIQKVRAQ (139 aa)) are head. The tract at residues 140 to 175 (EREQIKVLNDKFASFIDKVRFLEQQNQVLETKWELL) is coil 1A. The 314-residue stretch at 140–453 (EREQIKVLND…KLLEGEECRM (314 aa)) folds into the IF rod domain. The segment at 176-194 (QQLDLNNCKKNLEPILEGY) is linker 1. Residues 195–286 (ISNLRKQLET…CLYDAEIAQI (92 aa)) form a coil 1B region. The interval 287 to 310 (QTHASETSVILSMDNNRDLDLDSI) is linker 12. Residues 311 to 449 (IAEVRMHYEE…ATYRKLLEGE (139 aa)) form a coil 2 region. The interval 450-529 (ECRMSGENPS…ASIPARKATR (80 aa)) is tail. The segment covering 484–500 (GASAVAGSSGSTQSGQT) has biased composition (low complexity). The tract at residues 484 to 529 (GASAVAGSSGSTQSGQTKTTEARGGDLKDTQGKSTPASIPARKATR) is disordered. Residues 503–514 (TEARGGDLKDTQ) show a composition bias toward basic and acidic residues. Thr-513 carries the post-translational modification Phosphothreonine.

This sequence belongs to the intermediate filament family. As to quaternary structure, heterotetramer of two type I and two type II keratins. In terms of tissue distribution, highly expressed in hair follicles from scalp. In hair, it is specifically present in the inner root sheath (IRS) of the hair follicle. Present in the IRS Huxley layer, but not in Henle layer or cuticle of the IRS. In the IRS Huxley layer, it is expressed in specialized Huxley cells, termed 'Fluegelzellen, along the area of differentiated Henle cells (at protein level).

Functionally, has a role in hair formation. Specific component of keratin intermediate filaments in the inner root sheath (IRS) of the hair follicle. This Homo sapiens (Human) protein is Keratin, type II cytoskeletal 74 (KRT74).